The primary structure comprises 33 residues: Phospholipase A2 homolog BmarPLA2 (33 aa).

This sequence belongs to the phospholipase A2 family. Group II subfamily. K49 sub-subfamily. Homodimer; non-covalently linked. Expressed by the venom gland.

It localises to the secreted. Its function is as follows. Snake phospholipase A2 homolog that lacks enzymatic activity. May display myotoxin activity. In isolated heart decreases cardiac frequency. Also decreases mean arterial pressure. Does not show antimicrobial activity. Does not change renal parameters (such as perfusion pressure, renal vascular resistance, urinary flow, glomerular filtration rate and sodium tubular transport). The polypeptide is Phospholipase A2 homolog BmarPLA2 (Bothrops marajoensis (Marajo lancehead)).